Reading from the N-terminus, the 492-residue chain is G protein-activated inward rectifier potassium channel 1 (492 aa).

Over 1-72 the chain is Cytoplasmic; the sequence is MSALRRKLGD…LFTTLVDLKW (72 aa). Residues 16-35 are disordered; that stretch reads STSASGGGLPPPRAAPRGKR. Residues 73 to 97 form a helical membrane-spanning segment; the sequence is RWNLFIFVLTYTVAWLFMASMWWVI. Residues 98–121 lie on the Extracellular side of the membrane; that stretch reads AYMRGDLNKAHDDSYTPCVANVYN. Residues 122-133 constitute an intramembrane region (helical; Pore-forming); that stretch reads FPSAFLFFIETE. An intramembrane region (pore-forming) is located at residues 134–140; sequence ATIGYGY. The Selectivity filter signature appears at 135-140; that stretch reads TIGYGY. The Extracellular portion of the chain corresponds to 141–149; sequence RYITDKCPE. A helical transmembrane segment spans residues 150–171; the sequence is GIILFLFQSILGSIVDAFLIGC. The Cytoplasmic segment spans residues 172–492; that stretch reads MFIKMSQPKK…LRKMNSDRFT (321 aa). The polyphosphoinositide (PIP2)-binding stretch occupies residues 174–201; sequence IKMSQPKKRAETLMFSEHAAISMRDGKL. The tract at residues 452 to 492 is disordered; that stretch reads SDPMSQSVADLPPKLQKLSGGGRMEGNLPPKLRKMNSDRFT.

Belongs to the inward rectifier-type potassium channel (TC 1.A.2.1) family. KCNJ3 subfamily. As to quaternary structure, associates with KCNJ5/GIRK4 or KCNJ6/GIRK2 or KCNJ9/GIRK3 to form a G-protein activated heteromultimer pore-forming unit. The resulting inward current is much larger.

The protein resides in the membrane. The catalysed reaction is K(+)(in) = K(+)(out). With respect to regulation, heteromultimer composed of KCNJ3/GIRK1 and KCNJ5/GIRK4 is activated by phosphatidylinositol 4,5 biphosphate (PtdIns(4,5)P2). Its function is as follows. Inward rectifier potassium channels are characterized by a greater tendency to allow potassium to flow into the cell rather than out of it. Their voltage dependence is regulated by the concentration of extracellular potassium; as external potassium is raised, the voltage range of the channel opening shifts to more positive voltages. The inward rectification is mainly due to the blockage of outward current by internal magnesium. This potassium channel is controlled by G proteins. This receptor plays a crucial role in regulating the heartbeat. This is G protein-activated inward rectifier potassium channel 1 (KCNJ3) from Gallus gallus (Chicken).